A 97-amino-acid chain; its full sequence is Co-chaperonin GroES (97 aa).

Belongs to the GroES chaperonin family. In terms of assembly, heptamer of 7 subunits arranged in a ring. Interacts with the chaperonin GroEL.

It is found in the cytoplasm. In terms of biological role, together with the chaperonin GroEL, plays an essential role in assisting protein folding. The GroEL-GroES system forms a nano-cage that allows encapsulation of the non-native substrate proteins and provides a physical environment optimized to promote and accelerate protein folding. GroES binds to the apical surface of the GroEL ring, thereby capping the opening of the GroEL channel. This Yersinia enterocolitica serotype O:8 / biotype 1B (strain NCTC 13174 / 8081) protein is Co-chaperonin GroES.